A 387-amino-acid chain; its full sequence is 3-ketoacyl-CoA thiolase (387 aa).

The active-site Acyl-thioester intermediate is Cys-91. Active-site proton acceptor residues include His-343 and Cys-373.

This sequence belongs to the thiolase-like superfamily. Thiolase family. Heterotetramer of two alpha chains (FadB) and two beta chains (FadA).

Its subcellular location is the cytoplasm. It catalyses the reaction an acyl-CoA + acetyl-CoA = a 3-oxoacyl-CoA + CoA. Its pathway is lipid metabolism; fatty acid beta-oxidation. Functionally, catalyzes the final step of fatty acid oxidation in which acetyl-CoA is released and the CoA ester of a fatty acid two carbons shorter is formed. The chain is 3-ketoacyl-CoA thiolase from Salmonella paratyphi A (strain ATCC 9150 / SARB42).